A 233-amino-acid polypeptide reads, in one-letter code: Orotidine 5'-phosphate decarboxylase (233 aa).

Residues Asp-11, Lys-34, 61–70, Thr-117, Arg-179, Gln-188, Gly-208, and Arg-209 each bind substrate; that span reads DLKLHDIPNT. Lys-63 acts as the Proton donor in catalysis.

It belongs to the OMP decarboxylase family. Type 1 subfamily. In terms of assembly, homodimer.

The catalysed reaction is orotidine 5'-phosphate + H(+) = UMP + CO2. It functions in the pathway pyrimidine metabolism; UMP biosynthesis via de novo pathway; UMP from orotate: step 2/2. Its function is as follows. Catalyzes the decarboxylation of orotidine 5'-monophosphate (OMP) to uridine 5'-monophosphate (UMP). The protein is Orotidine 5'-phosphate decarboxylase of Streptococcus pneumoniae (strain P1031).